Reading from the N-terminus, the 304-residue chain is Putative S-adenosyl-L-methionine-dependent methyltransferase Mmcs_1043 (304 aa).

Residues Asp130 and 159 to 160 contribute to the S-adenosyl-L-methionine site; that span reads DL.

It belongs to the UPF0677 family.

Its function is as follows. Exhibits S-adenosyl-L-methionine-dependent methyltransferase activity. The chain is Putative S-adenosyl-L-methionine-dependent methyltransferase Mmcs_1043 from Mycobacterium sp. (strain MCS).